A 130-amino-acid polypeptide reads, in one-letter code: Phosphoribosyl-ATP pyrophosphatase (130 aa).

It belongs to the PRA-PH family.

Its subcellular location is the cytoplasm. The enzyme catalyses 1-(5-phospho-beta-D-ribosyl)-ATP + H2O = 1-(5-phospho-beta-D-ribosyl)-5'-AMP + diphosphate + H(+). Its pathway is amino-acid biosynthesis; L-histidine biosynthesis; L-histidine from 5-phospho-alpha-D-ribose 1-diphosphate: step 2/9. The chain is Phosphoribosyl-ATP pyrophosphatase from Albidiferax ferrireducens (strain ATCC BAA-621 / DSM 15236 / T118) (Rhodoferax ferrireducens).